A 574-amino-acid polypeptide reads, in one-letter code: Membrane protein insertase YidC (574 aa).

The helical transmembrane segment at 6–26 (VFLIFAWLMVAALLWMEWGKE) threads the bilayer. The segment at 65 to 85 (QAGAPGKVPATSTTTATPAAA) is disordered. A run of 5 helical transmembrane segments spans residues 350 to 370 (VIDY…FWVL), 376 to 396 (FLHN…LVLY), 447 to 467 (GGCL…WVLV), 491 to 511 (FILP…TPTP), and 525 to 545 (PLVF…YWVV).

Belongs to the OXA1/ALB3/YidC family. Type 1 subfamily. As to quaternary structure, interacts with the Sec translocase complex via SecD. Specifically interacts with transmembrane segments of nascent integral membrane proteins during membrane integration.

The protein resides in the cell inner membrane. Its function is as follows. Required for the insertion and/or proper folding and/or complex formation of integral membrane proteins into the membrane. Involved in integration of membrane proteins that insert both dependently and independently of the Sec translocase complex, as well as at least some lipoproteins. Aids folding of multispanning membrane proteins. The sequence is that of Membrane protein insertase YidC from Xanthomonas oryzae pv. oryzae (strain PXO99A).